The chain runs to 481 residues: UDP-N-acetylmuramate--L-alanine ligase (481 aa).

115–121 serves as a coordination point for ATP; sequence GTHGKTT.

Belongs to the MurCDEF family.

The protein localises to the cytoplasm. It carries out the reaction UDP-N-acetyl-alpha-D-muramate + L-alanine + ATP = UDP-N-acetyl-alpha-D-muramoyl-L-alanine + ADP + phosphate + H(+). It functions in the pathway cell wall biogenesis; peptidoglycan biosynthesis. Cell wall formation. The sequence is that of UDP-N-acetylmuramate--L-alanine ligase from Rhodospirillum rubrum (strain ATCC 11170 / ATH 1.1.1 / DSM 467 / LMG 4362 / NCIMB 8255 / S1).